A 56-amino-acid chain; its full sequence is Large ribosomal subunit protein bL32 (56 aa).

Positions 1 to 23 are disordered; the sequence is MAVQQNKSTRSKRGMRRSHNALP. Over residues 9 to 19 the composition is skewed to basic residues; sequence TRSKRGMRRSH.

This sequence belongs to the bacterial ribosomal protein bL32 family.

This Blochmanniella floridana protein is Large ribosomal subunit protein bL32.